Here is a 316-residue protein sequence, read N- to C-terminus: MDKENFTRLRGELFCDHPLARYTSWRVGGKAERFYRPADLFDLQDFLTQLPSDEPLTWLGLGSNVLIRDGGIKGTVILTLNRLKELSVVNSQLAFREKSGTEDFFSGNGKTIIRAEAGVTCAKLAKFCVSQGLEDGAFFAGIPGTVGGALAMNAGAFGGETWRTVIGVETMNHQGEILKRTPDEFKIHYRQVEGLENQFFIAGYFCFNHGDPDKAKTAINALLKKRNLSQPIGKYSCGSVFRNPPGDYAARLIESAGLKGKSIGSAEVSEKHANFILNKGNASAADIEALIHYVAQHVSQIHGIQLVKEVHIIGRS.

Residues V27–K225 form the FAD-binding PCMH-type domain. Residue R190 is part of the active site. S239 functions as the Proton donor in the catalytic mechanism. E309 is a catalytic residue.

Belongs to the MurB family. FAD serves as cofactor.

The protein resides in the cytoplasm. The catalysed reaction is UDP-N-acetyl-alpha-D-muramate + NADP(+) = UDP-N-acetyl-3-O-(1-carboxyvinyl)-alpha-D-glucosamine + NADPH + H(+). It functions in the pathway cell wall biogenesis; peptidoglycan biosynthesis. Functionally, cell wall formation. This chain is UDP-N-acetylenolpyruvoylglucosamine reductase, found in Coxiella burnetii (strain CbuK_Q154) (Coxiella burnetii (strain Q154)).